The sequence spans 463 residues: Ribosomal protein uS12 methylthiotransferase RimO (463 aa).

In terms of domain architecture, MTTase N-terminal spans 15–130 (PKVGMVSLGC…VMQVVHSHLP (116 aa)). Positions 24, 60, 89, 161, 165, and 168 each coordinate [4Fe-4S] cluster. The 246-residue stretch at 147–392 (LTPRHYAYLK…MEVAEEVSAA (246 aa)) folds into the Radical SAM core domain. Residues 395-463 (ERKVGKTLKV…ADGHDLWGEV (69 aa)) form the TRAM domain.

Belongs to the methylthiotransferase family. RimO subfamily. [4Fe-4S] cluster serves as cofactor.

The protein localises to the cytoplasm. It catalyses the reaction L-aspartate(89)-[ribosomal protein uS12]-hydrogen + (sulfur carrier)-SH + AH2 + 2 S-adenosyl-L-methionine = 3-methylsulfanyl-L-aspartate(89)-[ribosomal protein uS12]-hydrogen + (sulfur carrier)-H + 5'-deoxyadenosine + L-methionine + A + S-adenosyl-L-homocysteine + 2 H(+). In terms of biological role, catalyzes the methylthiolation of an aspartic acid residue of ribosomal protein uS12. In Burkholderia thailandensis (strain ATCC 700388 / DSM 13276 / CCUG 48851 / CIP 106301 / E264), this protein is Ribosomal protein uS12 methylthiotransferase RimO.